The sequence spans 861 residues: Integrator complex subunit 6-like (861 aa).

The VWFA domain maps to 3–227; it reads ILLFLIDTSA…QCLESLVQKV (225 aa). Serine 617 carries the phosphoserine modification.

In Mus musculus (Mouse), this protein is Integrator complex subunit 6-like (Ints6l).